The primary structure comprises 810 residues: Glycerol-3-phosphate acyltransferase (810 aa).

The short motif at 305–310 (CHRSHI) is the HXXXXD motif element.

Belongs to the GPAT/DAPAT family.

It localises to the cell inner membrane. The catalysed reaction is sn-glycerol 3-phosphate + an acyl-CoA = a 1-acyl-sn-glycero-3-phosphate + CoA. It functions in the pathway phospholipid metabolism; CDP-diacylglycerol biosynthesis; CDP-diacylglycerol from sn-glycerol 3-phosphate: step 1/3. This is Glycerol-3-phosphate acyltransferase from Haemophilus influenzae (strain 86-028NP).